A 330-amino-acid chain; its full sequence is ADP-L-glycero-D-manno-heptose-6-epimerase (330 aa).

Residues 10 to 11 (FI), 31 to 32 (DD), lysine 38, lysine 53, 74 to 78 (QGACS), and asparagine 91 each bind NADP(+). Tyrosine 138 functions as the Proton acceptor in the catalytic mechanism. Lysine 142 provides a ligand contact to NADP(+). Asparagine 167 is a binding site for substrate. 2 residues coordinate NADP(+): valine 168 and lysine 176. The active-site Proton acceptor is lysine 176. Substrate-binding positions include arginine 178, histidine 185, 199–202 (FAGW), arginine 212, and tyrosine 291.

The protein belongs to the NAD(P)-dependent epimerase/dehydratase family. HldD subfamily. Homopentamer. NADP(+) is required as a cofactor.

It catalyses the reaction ADP-D-glycero-beta-D-manno-heptose = ADP-L-glycero-beta-D-manno-heptose. Its pathway is nucleotide-sugar biosynthesis; ADP-L-glycero-beta-D-manno-heptose biosynthesis; ADP-L-glycero-beta-D-manno-heptose from D-glycero-beta-D-manno-heptose 7-phosphate: step 4/4. In terms of biological role, catalyzes the interconversion between ADP-D-glycero-beta-D-manno-heptose and ADP-L-glycero-beta-D-manno-heptose via an epimerization at carbon 6 of the heptose. In Bordetella petrii (strain ATCC BAA-461 / DSM 12804 / CCUG 43448), this protein is ADP-L-glycero-D-manno-heptose-6-epimerase.